Here is a 133-residue protein sequence, read N- to C-terminus: MEIQQQKGVGNSKVVKVEKEESWDLFVNQASNEGHPVVAHFGASWCVTSLSMNYKFEELAQTHPEILFLYVDVDDVQSVSSKLGVKAMPTFFLIKDKEVVNKIVGANPDEVKKMVDASAESFGVTAPPDIVVE.

In terms of domain architecture, Thioredoxin spans 1–120 (MEIQQQKGVG…VKKMVDASAE (120 aa)).

Belongs to the thioredoxin family.

This Oryza sativa subsp. japonica (Rice) protein is Thioredoxin-like protein CXXS1.